The chain runs to 240 residues: UDP-2,3-diacylglucosamine hydrolase (240 aa).

D9, H11, D43, N81, and H116 together coordinate Mn(2+). Residue 81 to 82 (NR) coordinates substrate. Substrate-binding residues include D124, S162, K166, K169, and H197. H197 and H199 together coordinate Mn(2+).

The protein belongs to the LpxH family. It depends on Mn(2+) as a cofactor.

It is found in the cell inner membrane. The catalysed reaction is UDP-2-N,3-O-bis[(3R)-3-hydroxytetradecanoyl]-alpha-D-glucosamine + H2O = 2-N,3-O-bis[(3R)-3-hydroxytetradecanoyl]-alpha-D-glucosaminyl 1-phosphate + UMP + 2 H(+). It participates in glycolipid biosynthesis; lipid IV(A) biosynthesis; lipid IV(A) from (3R)-3-hydroxytetradecanoyl-[acyl-carrier-protein] and UDP-N-acetyl-alpha-D-glucosamine: step 4/6. In terms of biological role, hydrolyzes the pyrophosphate bond of UDP-2,3-diacylglucosamine to yield 2,3-diacylglucosamine 1-phosphate (lipid X) and UMP by catalyzing the attack of water at the alpha-P atom. Involved in the biosynthesis of lipid A, a phosphorylated glycolipid that anchors the lipopolysaccharide to the outer membrane of the cell. The chain is UDP-2,3-diacylglucosamine hydrolase from Neisseria gonorrhoeae (strain ATCC 700825 / FA 1090).